A 265-amino-acid polypeptide reads, in one-letter code: HUWE1-associated protein modifying stress responses (265 aa).

Disordered regions lie at residues 1 to 22 (MEEKKEEGEAEIQEHGPEHWFS), 140 to 173 (GKAPPPRSSRAPPRLAMVSPSRSTPSETSSSVET), and 194 to 219 (ISMRSGAPGSPTHLSASSAPSRRRNG). Residues 147–172 (SSRAPPRLAMVSPSRSTPSETSSSVE) show a composition bias toward low complexity.

It belongs to the HAPSTR1 family. Oligomer.

Its subcellular location is the nucleus. It localises to the cytoplasm. Acts as a central player within a network of stress response pathways promoting cellular adaptability. Functions as a negative regulator of TP53/P53 in the cellular response to telomere erosion and probably also DNA damage. The polypeptide is HUWE1-associated protein modifying stress responses (Danio rerio (Zebrafish)).